The sequence spans 175 residues: uncharacterized protein (175 aa).

Residues 10-157 (LFELYAELIH…AERLFRDLVT (148 aa)) form the HTH marR-type domain. A DNA-binding region (H-T-H motif) is located at residues 68-91 (VTSIAEKMNTTKATVSRISTKLLG).

It localises to the cytoplasm. This is an uncharacterized protein from Bacillus subtilis (strain 168).